The chain runs to 142 residues: Transcriptional regulator MraZ (142 aa).

SpoVT-AbrB domains follow at residues 5-48 and 77-120; these read EFEY…PLCE and AFDV…DKET.

This sequence belongs to the MraZ family. In terms of assembly, forms oligomers.

Its subcellular location is the cytoplasm. The protein localises to the nucleoid. The polypeptide is Transcriptional regulator MraZ (Dehalococcoides mccartyi (strain ATCC BAA-2266 / KCTC 15142 / 195) (Dehalococcoides ethenogenes (strain 195))).